A 115-amino-acid chain; its full sequence is U3-lycotoxin-Ls1a (115 aa).

The first 20 residues, 1–20 (MKFVLLFGVLLVTLFSYSSA), serve as a signal peptide directing secretion. Residues 21–44 (EMLDDFDQADEDELLSLIEKEEAR) constitute a propeptide that is removed on maturation. 4 disulfide bridges follow: Cys-48-Cys-63, Cys-55-Cys-72, Cys-62-Cys-87, and Cys-74-Cys-85.

Belongs to the neurotoxin 19 (CSTX) family. 01 subfamily. In terms of tissue distribution, expressed by the venom gland.

It localises to the secreted. In Lycosa singoriensis (Wolf spider), this protein is U3-lycotoxin-Ls1a.